Here is a 475-residue protein sequence, read N- to C-terminus: Aspartate ammonia-lyase (475 aa).

Residues Thr104, Ser143, Thr144, Asn145, Thr190, and His191 each coordinate L-aspartate. Residues 320 to 329 (GSSIMPGKVN) form an SS loop region. Ser321 (proton acceptor) is an active-site residue. Positions 322 and 327 each coordinate L-aspartate.

The protein belongs to the class-II fumarase/aspartase family. Aspartase subfamily. In terms of assembly, homotetramer.

The catalysed reaction is L-aspartate = fumarate + NH4(+). Its function is as follows. Catalyzes the reversible conversion of L-aspartate to fumarate and ammonia. This Bacillus subtilis (strain 168) protein is Aspartate ammonia-lyase.